Consider the following 187-residue polypeptide: ATP-dependent protease subunit HslV (187 aa).

Residue Thr7 is part of the active site. Na(+)-binding residues include Ala162, Cys165, and Thr168.

It belongs to the peptidase T1B family. HslV subfamily. A double ring-shaped homohexamer of HslV is capped on each side by a ring-shaped HslU homohexamer. The assembly of the HslU/HslV complex is dependent on binding of ATP.

It localises to the cytoplasm. It carries out the reaction ATP-dependent cleavage of peptide bonds with broad specificity.. With respect to regulation, allosterically activated by HslU binding. Functionally, protease subunit of a proteasome-like degradation complex believed to be a general protein degrading machinery. This chain is ATP-dependent protease subunit HslV, found in Methylococcus capsulatus (strain ATCC 33009 / NCIMB 11132 / Bath).